The following is a 577-amino-acid chain: Methionine--tRNA ligase, mitochondrial (577 aa).

The short motif at 25–37 (PIFYVNAAPHIGH) is the 'HIGH' region element. The short motif at 329–333 (KMSKS) is the 'KMSKS' region element. ATP is bound at residue Lys-332.

This sequence belongs to the class-I aminoacyl-tRNA synthetase family.

The protein localises to the mitochondrion matrix. It carries out the reaction tRNA(Met) + L-methionine + ATP = L-methionyl-tRNA(Met) + AMP + diphosphate. The sequence is that of Methionine--tRNA ligase, mitochondrial (MSM1) from Candida albicans (Yeast).